We begin with the raw amino-acid sequence, 137 residues long: Peptide methionine sulfoxide reductase MsrB (137 aa).

The MsrB domain occupies 7 to 129; that stretch reads PEELKNGLSE…NSASLSFTDE (123 aa). Zn(2+) contacts are provided by cysteine 46, cysteine 49, cysteine 95, and cysteine 98. Cysteine 118 acts as the Nucleophile in catalysis.

Belongs to the MsrB Met sulfoxide reductase family. Requires Zn(2+) as cofactor.

It carries out the reaction L-methionyl-[protein] + [thioredoxin]-disulfide + H2O = L-methionyl-(R)-S-oxide-[protein] + [thioredoxin]-dithiol. This is Peptide methionine sulfoxide reductase MsrB from Klebsiella pneumoniae subsp. pneumoniae (strain ATCC 700721 / MGH 78578).